The chain runs to 209 residues: Thymidylate kinase (209 aa).

Residue 13 to 20 (GLEGAGKS) participates in ATP binding.

This sequence belongs to the thymidylate kinase family.

The catalysed reaction is dTMP + ATP = dTDP + ADP. Functionally, phosphorylation of dTMP to form dTDP in both de novo and salvage pathways of dTTP synthesis. This chain is Thymidylate kinase, found in Shewanella sp. (strain MR-4).